Reading from the N-terminus, the 237-residue chain is Ribonuclease PH (237 aa).

Residues arginine 86 and 124-126 (GTR) each bind phosphate.

The protein belongs to the RNase PH family. As to quaternary structure, homohexameric ring arranged as a trimer of dimers.

It carries out the reaction tRNA(n+1) + phosphate = tRNA(n) + a ribonucleoside 5'-diphosphate. Functionally, phosphorolytic 3'-5' exoribonuclease that plays an important role in tRNA 3'-end maturation. Removes nucleotide residues following the 3'-CCA terminus of tRNAs; can also add nucleotides to the ends of RNA molecules by using nucleoside diphosphates as substrates, but this may not be physiologically important. Probably plays a role in initiation of 16S rRNA degradation (leading to ribosome degradation) during starvation. This chain is Ribonuclease PH, found in Dinoroseobacter shibae (strain DSM 16493 / NCIMB 14021 / DFL 12).